The primary structure comprises 378 residues: Vacuolar membrane protein CAGL0J10076g (378 aa).

Residues 18–70 (RGLPRLVTTSTTPTPTTEPTTEPTTTKDETSQTSATDASTATTSTAATSTAAT) are disordered. Composition is skewed to low complexity over residues 25 to 41 (TTSTTPTPTTEPTTEPT) and 48 to 70 (SQTSATDASTATTSTAATSTAAT). The helical transmembrane segment at 118 to 138 (FIAVGSIAGAILMLIFLWWSI) threads the bilayer. The interval 299–368 (NDYDTPLIPD…ARDHRKTPSM (70 aa)) is disordered. Residues 321–337 (RSHRKTPSNDKYHRRNR) show a composition bias toward basic residues. Residues 343-356 (SPSRSPTRTPIRTR) show a composition bias toward low complexity.

This sequence belongs to the PRM5 family.

It localises to the vacuole membrane. The protein is Vacuolar membrane protein CAGL0J10076g of Candida glabrata (strain ATCC 2001 / BCRC 20586 / JCM 3761 / NBRC 0622 / NRRL Y-65 / CBS 138) (Yeast).